Reading from the N-terminus, the 240-residue chain is Large ribosomal subunit protein uL2 (240 aa).

Over residues 1–12 (MGRRIQGQRRGR) the composition is skewed to basic residues. Disordered regions lie at residues 1–21 (MGRRIQGQRRGRGGPTFRAPS) and 198–240 (VDHP…GSNK). Residues 221 to 231 (PPGRKVGDIAS) are compositionally biased toward basic and acidic residues.

Belongs to the universal ribosomal protein uL2 family. In terms of assembly, part of the 50S ribosomal subunit. Forms a bridge to the 30S subunit in the 70S ribosome.

In terms of biological role, one of the primary rRNA binding proteins. Required for association of the 30S and 50S subunits to form the 70S ribosome, for tRNA binding and peptide bond formation. It has been suggested to have peptidyltransferase activity; this is somewhat controversial. Makes several contacts with the 16S rRNA in the 70S ribosome. The polypeptide is Large ribosomal subunit protein uL2 (Halorubrum lacusprofundi (strain ATCC 49239 / DSM 5036 / JCM 8891 / ACAM 34)).